Here is a 197-residue protein sequence, read N- to C-terminus: Imidazoleglycerol-phosphate dehydratase (197 aa).

The protein belongs to the imidazoleglycerol-phosphate dehydratase family.

The protein resides in the cytoplasm. It carries out the reaction D-erythro-1-(imidazol-4-yl)glycerol 3-phosphate = 3-(imidazol-4-yl)-2-oxopropyl phosphate + H2O. The protein operates within amino-acid biosynthesis; L-histidine biosynthesis; L-histidine from 5-phospho-alpha-D-ribose 1-diphosphate: step 6/9. This chain is Imidazoleglycerol-phosphate dehydratase, found in Azotobacter vinelandii (strain DJ / ATCC BAA-1303).